A 562-amino-acid polypeptide reads, in one-letter code: Phosphoglucomutase-1 (562 aa).

N-acetylmethionine is present on M1. K16 carries the N6-acetyllysine modification. Residue R23 coordinates alpha-D-glucose 1,6-bisphosphate. T115 is subject to Phosphothreonine. S117 is an alpha-D-glucose 1,6-bisphosphate binding site. S117 (phosphoserine intermediate) is an active-site residue. S117 is a binding site for Mg(2+). Residues S117 and S134 each carry the phosphoserine modification. At T185 the chain carries Phosphothreonine. Phosphoserine is present on S213. Mg(2+) is bound by residues D288, D290, and D292. Alpha-D-glucose 1,6-bisphosphate is bound by residues D292 and R293. N6-acetyllysine is present on K349. Y353 bears the Phosphotyrosine mark. Position 357 (T357) interacts with alpha-D-glucose 1,6-bisphosphate. Position 369 is a phosphoserine (S369). Residues E376, S378, and K389 each coordinate alpha-D-glucose 1,6-bisphosphate. S378 is subject to Phosphoserine. K419 is modified (N6-succinyllysine). A Phosphothreonine; by PAK1 modification is found at T467. 3 positions are modified to phosphoserine: S477, S485, and S505. T507 is subject to Phosphothreonine. Phosphoserine is present on residues S509 and S541.

The protein belongs to the phosphohexose mutase family. In terms of assembly, monomer. Requires Mg(2+) as cofactor. In terms of processing, phosphorylation at Thr-467 by PAK1 significantly enhances enzymatic activity.

It is found in the cytoplasm. The catalysed reaction is alpha-D-glucose 1-phosphate = alpha-D-glucose 6-phosphate. It carries out the reaction O-phospho-L-seryl-[protein] + alpha-D-glucose 1-phosphate = alpha-D-glucose 1,6-bisphosphate + L-seryl-[protein]. The enzyme catalyses alpha-D-glucose 1,6-bisphosphate + L-seryl-[protein] = O-phospho-L-seryl-[protein] + alpha-D-glucose 6-phosphate. In terms of biological role, catalyzes the reversible isomerization of alpha-D-glucose 1-phosphate to alpha-D-glucose 6-phosphate. The mechanism proceeds via the intermediate compound alpha-D-glucose 1,6-bisphosphate. This enzyme participates in both the breakdown and synthesis of glucose. This chain is Phosphoglucomutase-1 (PGM1), found in Bos taurus (Bovine).